The chain runs to 80 residues: Translation initiation factor IF-1, chloroplastic (80 aa).

Residues 1-74 (MKEQKWIHEG…TRGRIIYRLR (74 aa)) enclose the S1-like domain.

Belongs to the IF-1 family. As to quaternary structure, component of the 30S ribosomal translation pre-initiation complex which assembles on the 30S ribosome in the order IF-2 and IF-3, IF-1 and N-formylmethionyl-tRNA(fMet); mRNA recruitment can occur at any time during PIC assembly.

It is found in the plastid. The protein resides in the chloroplast. Its function is as follows. One of the essential components for the initiation of protein synthesis. Stabilizes the binding of IF-2 and IF-3 on the 30S subunit to which N-formylmethionyl-tRNA(fMet) subsequently binds. Helps modulate mRNA selection, yielding the 30S pre-initiation complex (PIC). Upon addition of the 50S ribosomal subunit IF-1, IF-2 and IF-3 are released leaving the mature 70S translation initiation complex. This is Translation initiation factor IF-1, chloroplastic from Illicium parviflorum (Yellow anise tree).